The following is a 541-amino-acid chain: Calcium-dependent protein kinase 9 (541 aa).

The segment at 1-75 is disordered; that stretch reads MGNCFAKNHG…PGLSPKTTTK (75 aa). Gly2 is lipidated: N-myristoyl glycine. Polar residues predominate over residues 14-54; that stretch reads PQQNGNTTRSVEVGVTNQDPPSYTPQARTTQQPEKPGSVNS. Residue Ser69 is modified to Phosphoserine. One can recognise a Protein kinase domain in the interval 91 to 349; the sequence is YTLGKELGRG…AADVLQHPWL (259 aa). ATP contacts are provided by residues 97–105 and Lys120; that span reads LGRGQFGVT. Residue Asp215 is the Proton acceptor of the active site. Phosphoserine is present on Ser255. The tract at residues 355-385 is autoinhibitory domain; sequence ASDKPIDSAVLSRMKQFRAMNKLKKLALKVI. EF-hand domains follow at residues 392 to 427, 428 to 463, 464 to 499, and 500 to 534; these read EEIQ…LGSK, LTEA…RHRL, ESNE…YGMG, and DDAT…GNPQ. The Ca(2+) site is built by Asp405, Asp407, Ser409, Thr411, Glu416, Asp441, Asp443, Asn445, Ser447, Glu452, Asp477, Asp479, Ser481, Tyr483, Glu488, Asp512, Asp514, Asp516, Arg518, and Glu523.

This sequence belongs to the protein kinase superfamily. Ser/Thr protein kinase family. CDPK subfamily.

It is found in the cell membrane. The catalysed reaction is L-seryl-[protein] + ATP = O-phospho-L-seryl-[protein] + ADP + H(+). It catalyses the reaction L-threonyl-[protein] + ATP = O-phospho-L-threonyl-[protein] + ADP + H(+). Activated by calcium. Autophosphorylation may play an important role in the regulation of the kinase activity. In terms of biological role, may play a role in signal transduction pathways that involve calcium as a second messenger. The protein is Calcium-dependent protein kinase 9 (CPK9) of Arabidopsis thaliana (Mouse-ear cress).